Reading from the N-terminus, the 286-residue chain is Octanoyltransferase (286 aa).

The region spanning 50-278 (LRTPDELWIV…NIAQRHAGVI (229 aa)) is the BPL/LPL catalytic domain. Substrate is bound by residues 89 to 96 (RGGQVTWH), 190 to 192 (SLG), and 203 to 205 (GVA). Cys221 serves as the catalytic Acyl-thioester intermediate.

This sequence belongs to the LipB family.

It is found in the cytoplasm. It catalyses the reaction octanoyl-[ACP] + L-lysyl-[protein] = N(6)-octanoyl-L-lysyl-[protein] + holo-[ACP] + H(+). It participates in protein modification; protein lipoylation via endogenous pathway; protein N(6)-(lipoyl)lysine from octanoyl-[acyl-carrier-protein]: step 1/2. Functionally, catalyzes the transfer of endogenously produced octanoic acid from octanoyl-acyl-carrier-protein onto the lipoyl domains of lipoate-dependent enzymes. Lipoyl-ACP can also act as a substrate although octanoyl-ACP is likely to be the physiological substrate. This Psychrobacter arcticus (strain DSM 17307 / VKM B-2377 / 273-4) protein is Octanoyltransferase.